The sequence spans 382 residues: Small ribosomal subunit protein bS1 homolog (382 aa).

4 S1 motif domains span residues 16–84, 102–167, 188–256, and 273–342; these read GDVV…LSKR, KEVF…LSHR, GSVL…LSIK, and GDVL…LSMR. A Phosphoserine modification is found at Ser-243.

Belongs to the bacterial ribosomal protein bS1 family.

Its function is as follows. Plays a role in sporulation. Cannot be expressed in wild-type E.coli, does not complement an E.coli rpsA deletion. In Bacillus subtilis (strain 168), this protein is Small ribosomal subunit protein bS1 homolog.